Here is a 508-residue protein sequence, read N- to C-terminus: Galactose-1-phosphate uridylyltransferase (508 aa).

Belongs to the galactose-1-phosphate uridylyltransferase type 2 family.

The protein localises to the cytoplasm. It catalyses the reaction alpha-D-galactose 1-phosphate + UDP-alpha-D-glucose = alpha-D-glucose 1-phosphate + UDP-alpha-D-galactose. Its pathway is carbohydrate metabolism; galactose metabolism. The polypeptide is Galactose-1-phosphate uridylyltransferase (galT) (Halalkalibacterium halodurans (strain ATCC BAA-125 / DSM 18197 / FERM 7344 / JCM 9153 / C-125) (Bacillus halodurans)).